Consider the following 293-residue polypeptide: Ribosomal protein L11 methyltransferase (293 aa).

4 residues coordinate S-adenosyl-L-methionine: Thr145, Gly166, Asp188, and Asn230.

This sequence belongs to the methyltransferase superfamily. PrmA family.

The protein localises to the cytoplasm. It catalyses the reaction L-lysyl-[protein] + 3 S-adenosyl-L-methionine = N(6),N(6),N(6)-trimethyl-L-lysyl-[protein] + 3 S-adenosyl-L-homocysteine + 3 H(+). Methylates ribosomal protein L11. This is Ribosomal protein L11 methyltransferase from Actinobacillus pleuropneumoniae serotype 3 (strain JL03).